A 548-amino-acid polypeptide reads, in one-letter code: Glucose-6-phosphate isomerase (548 aa).

Residue Glu-355 is the Proton donor of the active site. Catalysis depends on residues His-386 and Lys-514.

Belongs to the GPI family.

It localises to the cytoplasm. It catalyses the reaction alpha-D-glucose 6-phosphate = beta-D-fructose 6-phosphate. It participates in carbohydrate biosynthesis; gluconeogenesis. Its pathway is carbohydrate degradation; glycolysis; D-glyceraldehyde 3-phosphate and glycerone phosphate from D-glucose: step 2/4. Functionally, catalyzes the reversible isomerization of glucose-6-phosphate to fructose-6-phosphate. The protein is Glucose-6-phosphate isomerase of Photorhabdus laumondii subsp. laumondii (strain DSM 15139 / CIP 105565 / TT01) (Photorhabdus luminescens subsp. laumondii).